We begin with the raw amino-acid sequence, 134 residues long: uncharacterized protein (134 aa).

This is an uncharacterized protein from Synechococcus elongatus (strain ATCC 33912 / PCC 7942 / FACHB-805) (Anacystis nidulans R2).